A 310-amino-acid polypeptide reads, in one-letter code: Ornithine carbamoyltransferase (310 aa).

Carbamoyl phosphate is bound by residues 57–60 (STRT), Gln84, Arg108, and 135–138 (HPCQ). Residues Asn166, Asp229, and 233 to 234 (SM) contribute to the L-ornithine site. Carbamoyl phosphate-binding positions include 269-270 (CL) and Arg297.

It belongs to the aspartate/ornithine carbamoyltransferase superfamily. OTCase family.

Its subcellular location is the cytoplasm. The enzyme catalyses carbamoyl phosphate + L-ornithine = L-citrulline + phosphate + H(+). It participates in amino-acid biosynthesis; L-arginine biosynthesis; L-arginine from L-ornithine and carbamoyl phosphate: step 1/3. In terms of biological role, reversibly catalyzes the transfer of the carbamoyl group from carbamoyl phosphate (CP) to the N(epsilon) atom of ornithine (ORN) to produce L-citrulline. The protein is Ornithine carbamoyltransferase of Thermosynechococcus vestitus (strain NIES-2133 / IAM M-273 / BP-1).